A 466-amino-acid chain; its full sequence is MAPNYAKKCPVMGKAPSSGHSSIGPQDVHTLEVLSNFNREKIPERVVHALGAGAYGEFEVTHDISDICNIDMLLGVGKKTSLVTRFSTTGLERGSSEGVQDLKGMATKLFTSDGEWDWVFLNFPFFFIRDPVKFPDMIHSQRRDPQTNRLNPNNFWEFVTENHESIHMVLLQYSDFGRMFTWRTLSSYSGHAFKWVMPDGSFKYVHFFLSSDRGPNFKDGAGTIMDSSEPDFASRDLFEAIERGDHPSWTANVQVIDPKDAPHLGFNILDVTKHWNLGTYPQGVEKIPSRPFGKLTLNRNVKDYFSEVEQLAFSPSHLVPGIEASEDPILQARLFAYPDAQRYRLGRTLSKQASPRTSSTAEYQASLGKDFAEWVAQVSSDVWSQPHEDDYKFAREYYEILPEFRSQEFQDRMVERIVESVSQTRQDIRNKVYRTFALVSSELATRVQEGVEGAEIGQEKNVQARL.

The tract at residues 1–22 is disordered; it reads MAPNYAKKCPVMGKAPSSGHSS. Residue histidine 48 is part of the active site. Heme is bound at residue tyrosine 337.

This sequence belongs to the catalase family. Requires heme as cofactor.

The protein operates within alkaloid biosynthesis; ergot alkaloid biosynthesis. Catalase; part of the gene cluster that mediates the biosynthesis of isofumigaclavines, fungal ergot alkaloids. The tryptophan dimethylallyltransferase ifgA catalyzes the first step of ergot alkaloid biosynthesis by condensing dimethylallyl diphosphate (DMAP) and tryptophan to form 4-dimethylallyl-L-tryptophan. The second step is catalyzed by the methyltransferase ifgB that methylates 4-dimethylallyl-L-tryptophan in the presence of S-adenosyl-L-methionine, resulting in the formation of N-methyl-dimethylallyl-L-tryptophan. The catalase ifgD and the FAD-dependent oxidoreductase ifgC then transform N-methyl-dimethylallyl-L-tryptophan to chanoclavine-I which is further oxidized by ifgE in the presence of NAD(+), resulting in the formation of chanoclavine-I aldehyde. The chanoclavine-I aldehyde reductases ifgG and/or fgaOx3 reduce chanoclavine-I aldehyde to dihydrochanoclavine-I aldehyde that spontaneously dehydrates to form 6,8-dimethyl-6,7-didehydroergoline. The festuclavine dehydrogenases ifgF1 and/or ifgF2 then catalyze the reduction of 6,8-dimethyl-6,7-didehydroergoline to form festuclavine. Hydrolysis of festuclavine by a yet undetermined cytochrome P450 monooxygenase (called ifgH) then leads to the formation of isofumigaclavine B which is in turn acetylated by ifgI to isofumigaclavine A. Penicillium roqueforti has interestingly at least two sets of genes for the consumption of chanoclavine-I aldehyde on three different loci, the OYEs ifgG/fgaOx3 and the festuclavine synthase homologs ifgF1/ifgF2. The reason for the duplication of these genes is unclear, probably to ensure the conversion of chanoclavine-I aldehyde by differential gene expression under various environmental conditions. The sequence is that of Catalase ifgD from Penicillium roqueforti (strain FM164).